The sequence spans 585 residues: RNA polymerase sigma factor RpoD (585 aa).

A disordered region spans residues 67 to 93; that stretch reads PASTLVPKDDSKPARKKKESSASTSGS. Residues 351-421 form a sigma-70 factor domain-2 region; it reads LVKANLRLVV…TRAISDQART (71 aa). An Interaction with polymerase core subunit RpoC motif is present at residues 375 to 378; the sequence is DLIQ. The tract at residues 430–506 is sigma-70 factor domain-3; the sequence is EQVNKVIRET…DTEVETPVNA (77 aa). Residues 519–572 are sigma-70 factor domain-4; it reads VLHTLPAREQKVIRMRFGLDDGYPQTLEEVGYQFKVTRERIRQIEAKALRRLRH. The H-T-H motif DNA-binding region spans 545–564; sequence LEEVGYQFKVTRERIRQIEA.

The protein belongs to the sigma-70 factor family. RpoD/SigA subfamily. As to quaternary structure, interacts transiently with the RNA polymerase catalytic core.

It is found in the cytoplasm. Sigma factors are initiation factors that promote the attachment of RNA polymerase to specific initiation sites and are then released. This sigma factor is the primary sigma factor during exponential growth. The protein is RNA polymerase sigma factor RpoD of Leptospira interrogans serogroup Icterohaemorrhagiae serovar copenhageni (strain Fiocruz L1-130).